We begin with the raw amino-acid sequence, 162 residues long: Neuritin-like protein (162 aa).

A signal peptide spans 1–32; sequence MMCNCCHCHWRRRCQRLPCALTLLLLLPLAVA. Alanine 136 carries the GPI-anchor amidated alanine lipid modification. A propeptide spans 137–162 (removed in mature form); that stretch reads PALAPAPAPVLLAAALALACLLGPLA.

The protein belongs to the neuritin family.

It is found in the cell membrane. The chain is Neuritin-like protein (Nrn1l) from Mus musculus (Mouse).